An 83-amino-acid chain; its full sequence is Small ribosomal subunit protein uS17 (83 aa).

Belongs to the universal ribosomal protein uS17 family. Part of the 30S ribosomal subunit.

Functionally, one of the primary rRNA binding proteins, it binds specifically to the 5'-end of 16S ribosomal RNA. The sequence is that of Small ribosomal subunit protein uS17 from Campylobacter jejuni subsp. jejuni serotype O:6 (strain 81116 / NCTC 11828).